Reading from the N-terminus, the 920-residue chain is Neurofibromin-A (920 aa).

Residues 63–291 form the Ras-GAP domain; the sequence is NKTLPLIKDL…EKMSAYFNLI (229 aa). Disordered stretches follow at residues 344–405 and 477–508; these read KWLA…TTTA and LGPS…GASM. Positions 346–369 are enriched in polar residues; sequence LATTPSGNTPSPAISNASSAHNGK. The span at 370 to 405 shows a compositional bias: low complexity; the sequence is SNNTTNNNNNNNNNNNNNNNNNNNNNNNSNKTTTTA. The segment covering 498–507 has biased composition (polar residues); sequence PTTSLQNGAS. The region spanning 512-673 is the CRAL-TRIO domain; it reads FDECTHMLER…TSKDFITKSY (162 aa).

Functionally, regulator of the GTPase activity of Ras, mainly RasG and RasB. In Dictyostelium discoideum (Social amoeba), this protein is Neurofibromin-A (nfaA).